We begin with the raw amino-acid sequence, 206 residues long: 3-demethoxyubiquinol 3-hydroxylase (206 aa).

Residues E55, E85, H88, E137, E169, and H172 each contribute to the Fe cation site.

It belongs to the COQ7 family. Fe cation serves as cofactor.

It localises to the cell membrane. The catalysed reaction is a 5-methoxy-2-methyl-3-(all-trans-polyprenyl)benzene-1,4-diol + AH2 + O2 = a 3-demethylubiquinol + A + H2O. Its pathway is cofactor biosynthesis; ubiquinone biosynthesis. Its function is as follows. Catalyzes the hydroxylation of 2-nonaprenyl-3-methyl-6-methoxy-1,4-benzoquinol during ubiquinone biosynthesis. This is 3-demethoxyubiquinol 3-hydroxylase from Azoarcus sp. (strain BH72).